Here is a 504-residue protein sequence, read N- to C-terminus: Maturase K (504 aa).

It belongs to the intron maturase 2 family. MatK subfamily.

It is found in the plastid. Its subcellular location is the chloroplast. Usually encoded in the trnK tRNA gene intron. Probably assists in splicing its own and other chloroplast group II introns. The polypeptide is Maturase K (Gossypium barbadense (Sea Island cotton)).